Here is a 205-residue protein sequence, read N- to C-terminus: Holliday junction branch migration complex subunit RuvA (205 aa).

The interval 1-64 (MIGRLRGVLV…EDAQLLYGFI (64 aa)) is domain I. Residues 65-143 (TKQERALFRL…SLMEASAGSE (79 aa)) are domain II. The segment at 144–156 (REFVLQSNYSPAP) is flexible linker. Positions 157–205 (TVNSAEEDAISALISLGYKPPQASKSVSAAYKEGMDSETLIKAALKSML) are domain III.

It belongs to the RuvA family. As to quaternary structure, homotetramer. Forms an RuvA(8)-RuvB(12)-Holliday junction (HJ) complex. HJ DNA is sandwiched between 2 RuvA tetramers; dsDNA enters through RuvA and exits via RuvB. An RuvB hexamer assembles on each DNA strand where it exits the tetramer. Each RuvB hexamer is contacted by two RuvA subunits (via domain III) on 2 adjacent RuvB subunits; this complex drives branch migration. In the full resolvosome a probable DNA-RuvA(4)-RuvB(12)-RuvC(2) complex forms which resolves the HJ.

The protein resides in the cytoplasm. The RuvA-RuvB-RuvC complex processes Holliday junction (HJ) DNA during genetic recombination and DNA repair, while the RuvA-RuvB complex plays an important role in the rescue of blocked DNA replication forks via replication fork reversal (RFR). RuvA specifically binds to HJ cruciform DNA, conferring on it an open structure. The RuvB hexamer acts as an ATP-dependent pump, pulling dsDNA into and through the RuvAB complex. HJ branch migration allows RuvC to scan DNA until it finds its consensus sequence, where it cleaves and resolves the cruciform DNA. The protein is Holliday junction branch migration complex subunit RuvA of Shewanella baltica (strain OS223).